Reading from the N-terminus, the 345-residue chain is Probable RuBisCO transcriptional regulator (345 aa).

Positions 6 to 63 constitute an HTH lysR-type domain; sequence FTLDQLRILKAIASEGSFKRAADTLYVSQPAVSLQVQNLEKQLSVPLFDRGGRKAQLT. The segment at residues 23–42 is a DNA-binding region (H-T-H motif); it reads FKRAADTLYVSQPAVSLQVQ. Positions 311-345 are disordered; the sequence is LDPERLFANPYSSNNGDRQGDGKDGKGSIEIDSVT. Residues 328-339 are compositionally biased toward basic and acidic residues; it reads RQGDGKDGKGSI.

This sequence belongs to the LysR transcriptional regulatory family.

In terms of biological role, trans-acting transcriptional regulator of RuBisCO genes (rbcL and rbcS) expression. This is Probable RuBisCO transcriptional regulator (rbcR) from Synechocystis sp. (strain ATCC 27184 / PCC 6803 / Kazusa).